The following is a 142-amino-acid chain: NTF2-related export protein 2 (142 aa).

Residues 17 to 136 (AAEEFVNIYY…WKIASDCFRF (120 aa)) enclose the NTF2 domain.

In terms of assembly, associates with NXF1, NXF2, NXF3 and NXF5.

The protein localises to the nucleus. It is found in the cytoplasm. Functionally, regulator of protein export for NES-containing proteins. Also plays a role in mRNA nuclear export. The sequence is that of NTF2-related export protein 2 (Nxt2) from Mus musculus (Mouse).